Here is a 1412-residue protein sequence, read N- to C-terminus: MAHSKTRANDGKITYPPGVKEISDKISKEEMVRRLKMVVKTFMDMDQDSEEEKELYLNLALHLASDFFLKHPDKDVRLLVACCLADIFRIYAPEAPYTSPDKLKDIFMFITRQLKGLEDTKSPQFNRYFYLLENIAWVKSYNICFELEDSNEIFTQLYRTLFSVINNGHNQKVHMHMVDLMSSIICEGDTVSQELLDTVLVNLVPAHKNLNKQAYDLAKALLKRTAQAIEPYITNFFNQVLMLGKTSISDLSEHVFDLILELYNIDSHLLLSVLPQLEFKLKSNDNEERLQVVKLLAKMFGAKDSELASQNKPLWQCYLGRFNDIHVPIRLECVKFASHCLMNHPDLAKDLTEYLKVRSHDPEEAIRHDVIVSIVTAAKKDLLLVNDHLLNFVRERTLDKRWRVRKEAMMGLAQIYKKYSLQSEAGKEAAKQISWIKDKLLHIYYQNSIDDRLLVERIFAQYMVPHNLETNERMKCLYYLYATLDSNAVKALNEMWKCQNLLRHQVKDLVDLIKQPKTDASSKAIFSKVMVITRNLPDPGKAQDFMKKFTQVLEDDEKIRSQLEMLVSPTCSCKQAEGCVREITKKLGNPKQPTNPFLEMIKFLLERIAPVHIDTESISALIKQVNKSIDGTADDEDEGVPTDQAIRAGLELLKVLSFTHPISFHSAETFESLLACLKMDDEKVAEAALQIFKNTGSKIEEDFPHIRSALLPVLHHKAKKGPPRQAKYAIHCINAIFSSKETQFAQIFEPLHKSLDPSNFEHLITPLVTIGHIAMLAPDQFAAPLKSLVATFIVKDLLMNDRLPGKKTTKLWVPDEEVSPETLVKIQAIKMMVRWLLGMKNNHSKSGTSTLRLLTTILHSDGDLTEQGKISKPDMSRLRLAAGSAIVKLAQEPCYHEIITLEQYQLCALAINDECYQVRQIFAQKLHKGLSRLRLPLEYMAICALCAKDPVKERRAHARQCLVKNINVRREYLKQHAAVSEKLLSLLPEYVVPYTIHLLAHDPDYVKVQDIEQLKDIKECLWFILEILMAKNENNSHAFIRKMVENIKQTKDAQGPDDAKMNEKLYTVCDVAMNIIMSKSTTYSLESPKDPVLPARYFTQPDKNFSNTKNYLPPEMKSFFTPGKPKAANVLGAVNKPLSSAGKQSQSKSSRMETVSNASSSSNPSSPGRIKGRLDSTEMDHSENEDFTLSSPLPGKKTDKRDDSDLSELEKPRGRKKPAITDSEEKLSIDDLNKLGQDQKLRGSQRGRKRPAVVSESDETQWQEEKRLKEDVIESEDEQNSPPKKGRRGRPPKPNNGGTPKEEPAAKSSKRSKKKQTSAAAVEEEEEEEERQTENIEQKPKGRQNRSTKRTQQSRAGRSKQAASKENESSEEMDVFQSSSPVSDDVPQEEVMEEEEVSTINVRRRTSKRERR.

An HEAT repeat occupies 383-419; it reads LLVNDHLLNFVRERTLDKRWRVRKEAMMGLAQIYKKY. The tract at residues 1137–1412 is disordered; it reads PLSSAGKQSQ…RRRTSKRERR (276 aa). 2 stretches are compositionally biased toward low complexity: residues 1139-1149 and 1156-1167; these read SSAGKQSQSKS and SNASSSSNPSSP. Basic and acidic residues-rich tracts occupy residues 1172-1184, 1196-1212, 1223-1241, and 1263-1272; these read GRLD…HSEN, KKTD…LEKP, SEEK…DQKL, and QEEKRLKEDV. The span at 1322–1331 shows a compositional bias: acidic residues; that stretch reads VEEEEEEEER. Over residues 1350-1362 the composition is skewed to polar residues; the sequence is RTQQSRAGRSKQA. The segment covering 1386-1397 has biased composition (acidic residues); the sequence is VPQEEVMEEEEV. Residues 1402–1412 show a composition bias toward basic residues; that stretch reads VRRRTSKRERR.

As to quaternary structure, interacts with the cohesin complex.

It localises to the nucleus. Its function is as follows. Plays a role in androgen-induced proliferative arrest. Required for maintenance of sister chromatid cohesion during mitosis. This Gallus gallus (Chicken) protein is Sister chromatid cohesion protein PDS5 homolog B (PDS5B).